Reading from the N-terminus, the 238-residue chain is 15,16-dihydrobiliverdin:ferredoxin oxidoreductase (238 aa).

Belongs to the HY2 family.

The catalysed reaction is 15,16-dihydrobiliverdin + oxidized 2[4Fe-4S]-[ferredoxin] = biliverdin IXalpha + reduced 2[4Fe-4S]-[ferredoxin] + 2 H(+). Catalyzes the two-electron reduction of biliverdin IX-alpha at the C15 methine bridge. This Prochlorococcus marinus (strain NATL2A) protein is 15,16-dihydrobiliverdin:ferredoxin oxidoreductase.